The chain runs to 473 residues: Cysteine--tRNA ligase (473 aa).

Zn(2+) is bound at residue Cys-30. Positions 32–42 (MTVYDYCHIGH) match the 'HIGH' region motif. The Zn(2+) site is built by Cys-213, His-238, and Glu-242. Positions 270 to 274 (KMSKS) match the 'KMSKS' region motif. Lys-273 contributes to the ATP binding site.

The protein belongs to the class-I aminoacyl-tRNA synthetase family. In terms of assembly, monomer. Zn(2+) serves as cofactor.

It is found in the cytoplasm. The enzyme catalyses tRNA(Cys) + L-cysteine + ATP = L-cysteinyl-tRNA(Cys) + AMP + diphosphate. This is Cysteine--tRNA ligase from Acinetobacter baylyi (strain ATCC 33305 / BD413 / ADP1).